Consider the following 233-residue polypeptide: Antiholin-like protein LrgB (233 aa).

7 helical membrane passes run 9 to 29 (TPYF…ILFE), 34 to 54 (FFLF…LYLT), 63 to 83 (IGGD…AIPL), 97 to 117 (IIGG…TFAK), 121 to 141 (FAND…IALP), 144 to 164 (AGIG…GVII), and 212 to 232 (IALV…VAIF).

This sequence belongs to the CidB/LrgB family. LrgB subfamily.

It localises to the cell membrane. Its function is as follows. Inhibits the expression or activity of extracellular murein hydrolases by interacting, possibly with LrgA, with the holin-like proteins CidA and/or CidB. The LrgAB and CidAB proteins may affect the proton motive force of the membrane. May be involved in programmed cell death (PCD), possibly triggering PCD in response to antibiotics and environmental stresses. The chain is Antiholin-like protein LrgB from Staphylococcus aureus (strain Mu3 / ATCC 700698).